The following is a 966-amino-acid chain: Regulator of G-protein signaling 3 (966 aa).

The PDZ domain occupies 18–95 (QITIRRGKDG…EIILLVWRVV (78 aa)). Residues 115–135 (THDLLSPPNKREKNCTHGAPV) are disordered. Arg167 bears the Omega-N-methylarginine mark. Disordered stretches follow at residues 403-618 (EADE…TGAV) and 637-704 (YSQL…RVQN). Polar residues-rich tracts occupy residues 527–548 (PETS…TELP) and 576–594 (SSAS…SSLG). The span at 649 to 675 (GEDEDAEEGEEGGEGEEDEEDDTSDDN) shows a compositional bias: acidic residues. The span at 676 to 686 (YGDRSEAKRSS) shows a compositional bias: basic and acidic residues. 4 positions are modified to phosphoserine: Ser712, Ser715, Ser747, and Ser776. The disordered stretch occupies residues 806–830 (FRRRNESPGAQPASKTDKTTKSFKP). Residues 820-830 (KTDKTTKSFKP) show a composition bias toward basic and acidic residues. The RGS domain occupies 841 to 966 (SLEKLLLHKY…INQKKMSPPL (126 aa)).

Binds the GNB1-GNG2 heterodimer. Binds EFNB1 and EFNB2. Phosphorylated by cyclic GMP-dependent protein kinase. Post-translationally, ISGylated. In terms of tissue distribution, detected in embryos from E8.5-16.5 in cortical ventricular zone, dorsal root ganglia and cerebellar primordia. Isoform 3 is detected in testis and in spermatocytes from newborn mice. Levels increase and reach a maximum after 21 days; after this they decrease again. Long isoforms are widely expressed.

It is found in the cytoplasm. The protein localises to the cell membrane. Its subcellular location is the nucleus. Its function is as follows. Down-regulates signaling from heterotrimeric G-proteins by increasing the GTPase activity of the alpha subunits, thereby driving them into their inactive GDP-bound form. Down-regulates G-protein-mediated release of inositol phosphates and activation of MAP kinases. The protein is Regulator of G-protein signaling 3 (Rgs3) of Mus musculus (Mouse).